We begin with the raw amino-acid sequence, 431 residues long: Septin-11 (431 aa).

An N-acetylalanine modification is found at alanine 2. Serine 9 carries the post-translational modification Phosphoserine. The Septin-type G domain maps to 38 to 304 (QGFCFNILCV…ELYRRCKLEE (267 aa)). The tract at residues 48–55 (GETGIGKS) is G1 motif. Residues 48 to 55 (GETGIGKS), glycine 103, 184 to 192 (KADTIAKNE), glycine 238, and arginine 253 each bind GTP. A G3 motif region spans residues 100 to 103 (DTVG). Residues 183–186 (AKAD) are G4 motif. Positions 320-413 (QETYEAKRNE…LLQSQAQQSG (94 aa)) form a coiled coil. The tract at residues 400–431 (AAAQLLQSQAQQSGAQQTKKDKDKKNPWLCTE) is disordered. A compositionally biased stretch (low complexity) spans 401–416 (AAQLLQSQAQQSGAQQ).

It belongs to the TRAFAC class TrmE-Era-EngA-EngB-Septin-like GTPase superfamily. Septin GTPase family. Septins polymerize into heterooligomeric protein complexes that form filaments, and can associate with cellular membranes, actin filaments and microtubules. Forms homooligomers. GTPase activity is required for filament formation. Interacts with SEPTIN7, SEPTIN9 and SEPTIN12. Expressed in the cerebral cortex (at protein level).

The protein resides in the cytoplasm. It is found in the cytoskeleton. Its subcellular location is the synapse. It localises to the cell projection. The protein localises to the dendritic spine. The protein resides in the axon. Its function is as follows. Filament-forming cytoskeletal GTPase. May play a role in cytokinesis (Potential). May play a role in the cytoarchitecture of neurons, including dendritic arborization and dendritic spines, and in GABAergic synaptic connectivity. The protein is Septin-11 of Mus musculus (Mouse).